The primary structure comprises 257 residues: Phosphonates import ATP-binding protein PhnC (257 aa).

The ABC transporter domain maps to 4–248; sequence IEFKDVRKVY…AFNEIYGRSI (245 aa). 37 to 44 lines the ATP pocket; the sequence is GLSGSGKS.

It belongs to the ABC transporter superfamily. Phosphonates importer (TC 3.A.1.9.1) family. In terms of assembly, the complex is composed of two ATP-binding proteins (PhnC), two transmembrane proteins (PhnE) and a solute-binding protein (PhnD).

The protein resides in the cell membrane. It catalyses the reaction phosphonate(out) + ATP + H2O = phosphonate(in) + ADP + phosphate + H(+). In terms of biological role, part of the ABC transporter complex PhnCDE involved in phosphonates import. Responsible for energy coupling to the transport system. In Staphylococcus saprophyticus subsp. saprophyticus (strain ATCC 15305 / DSM 20229 / NCIMB 8711 / NCTC 7292 / S-41), this protein is Phosphonates import ATP-binding protein PhnC.